Reading from the N-terminus, the 383-residue chain is Cell division protein FtsZ (383 aa).

Residues 20-24, 107-109, Glu-138, Arg-142, and Asn-186 each bind GTP; these read GGGGN and GTG.

The protein belongs to the FtsZ family. As to quaternary structure, homodimer. Polymerizes to form a dynamic ring structure in a strictly GTP-dependent manner. Interacts directly with several other division proteins.

Its subcellular location is the cytoplasm. In terms of biological role, essential cell division protein that forms a contractile ring structure (Z ring) at the future cell division site. The regulation of the ring assembly controls the timing and the location of cell division. One of the functions of the FtsZ ring is to recruit other cell division proteins to the septum to produce a new cell wall between the dividing cells. Binds GTP and shows GTPase activity. The sequence is that of Cell division protein FtsZ from Shigella flexneri.